The following is a 557-amino-acid chain: CTP synthase (557 aa).

The interval 1 to 267 (MAKYIFVTGG…GAYLTQRLGL (267 aa)) is amidoligase domain. Ser13 serves as a coordination point for CTP. Ser13 lines the UTP pocket. Residue 14-19 (SVGKGI) participates in ATP binding. Residue Tyr54 participates in L-glutamine binding. Asp71 is an ATP binding site. Positions 71 and 141 each coordinate Mg(2+). CTP is bound by residues 148 to 150 (DIE), 188 to 193 (KTKPTQ), and Lys224. UTP-binding positions include 188 to 193 (KTKPTQ) and Lys224. Positions 292 to 535 (AIALVGKYVE…VAAAAKTFRE (244 aa)) constitute a Glutamine amidotransferase type-1 domain. Residue Gly354 participates in L-glutamine binding. The active-site Nucleophile; for glutamine hydrolysis is the Cys381. Residues 382 to 385 (LGMQ), Glu406, and Arg463 each bind L-glutamine. Residues His508 and Glu510 contribute to the active site. A disordered region spans residues 536-557 (GDQRPLPLEQNGAVTEHEPHSR).

This sequence belongs to the CTP synthase family. Homotetramer.

The catalysed reaction is UTP + L-glutamine + ATP + H2O = CTP + L-glutamate + ADP + phosphate + 2 H(+). It catalyses the reaction L-glutamine + H2O = L-glutamate + NH4(+). It carries out the reaction UTP + NH4(+) + ATP = CTP + ADP + phosphate + 2 H(+). It functions in the pathway pyrimidine metabolism; CTP biosynthesis via de novo pathway; CTP from UDP: step 2/2. Allosterically activated by GTP, when glutamine is the substrate; GTP has no effect on the reaction when ammonia is the substrate. The allosteric effector GTP functions by stabilizing the protein conformation that binds the tetrahedral intermediate(s) formed during glutamine hydrolysis. Inhibited by the product CTP, via allosteric rather than competitive inhibition. Catalyzes the ATP-dependent amination of UTP to CTP with either L-glutamine or ammonia as the source of nitrogen. Regulates intracellular CTP levels through interactions with the four ribonucleotide triphosphates. The protein is CTP synthase of Roseiflexus sp. (strain RS-1).